Here is a 199-residue protein sequence, read N- to C-terminus: Charged multivesicular body protein 1b (199 aa).

2 coiled-coil regions span residues 10-48 (NLKF…MEVA) and 178-199 (TSVA…RDQV). The tract at residues 167-199 (ELPQGQTGSVGTSVASAEQDELSQRLARLRDQV) is disordered. Over residues 170–182 (QGQTGSVGTSVAS) the composition is skewed to polar residues. The short motif at 186 to 196 (DELSQRLARLR) is the MIT-interacting motif element.

Belongs to the SNF7 family. Probable peripherally associated component of the endosomal sorting required for transport complex III (ESCRT-III).

The protein localises to the cytoplasm. It is found in the cytosol. It localises to the endosome. The protein resides in the late endosome membrane. In terms of biological role, probable peripherally associated component of the endosomal sorting required for transport complex III (ESCRT-III) which is involved in multivesicular bodies (MVBs) formation and sorting of endosomal cargo proteins into MVBs. MVBs contain intraluminal vesicles (ILVs) that are generated by invagination and scission from the limiting membrane of the endosome and mostly are delivered to lysosomes enabling degradation of membrane proteins, such as stimulated growth factor receptors, lysosomal enzymes and lipids. The protein is Charged multivesicular body protein 1b (CHMP1B) of Gallus gallus (Chicken).